A 152-amino-acid polypeptide reads, in one-letter code: Synaptobrevin (152 aa).

Residues 1-16 show a composition bias toward polar residues; the sequence is MENNEAPSPSGSNNND. The segment at 1–30 is disordered; it reads MENNEAPSPSGSNNNDFPILPPPPNANDNY. The Cytoplasmic segment spans residues 1 to 110; it reads MENNEAPSPS…KRKQWWANMK (110 aa). Residues 47–107 enclose the v-SNARE coiled-coil homology domain; sequence KLQQTQAKVD…GKLKRKQWWA (61 aa). The chain crosses the membrane as a helical; Anchor for type IV membrane protein span at residues 111–130; sequence MMIILGVIAVVLLIIVLVSV. The Vesicular portion of the chain corresponds to 131 to 152; that stretch reads WPSSSDSGSGGGNKAITQAPPH. A disordered region spans residues 133-152; the sequence is SSSDSGSGGGNKAITQAPPH.

Belongs to the synaptobrevin family. Part of the SNARE core complex containing Snap25 and syntaxin. Ubiquitinated by gzl, regulating endocytic trafficking. In wing imaginal disks, ubiquitination by gzl promotes transcytosis of wingless (wg) to the basolateral surface. As to expression, not nervous system-specific; abundant in cells of the gut and Malpighian tubules.

The protein resides in the cytoplasmic vesicle. The protein localises to the secretory vesicle. It localises to the synaptic vesicle membrane. It is found in the cell membrane. Its function is as follows. Involved in the targeting and/or fusion of transport vesicles to their target membrane. This is Synaptobrevin from Drosophila melanogaster (Fruit fly).